The chain runs to 109 residues: MNVLNKIALVTGGGTGIGKAASMELAKRGAIVAVNYSRSQSEAEETVEMIQKAGGQAFAIQADVSKNSDVQDMIQAIVNTHGTVDILVNNASITRHIPMDDLEAATEDV.

This sequence belongs to the short-chain dehydrogenases/reductases (SDR) family.

In Bacillus subtilis (strain 168), this protein is Short-chain dehydrogenase/reductase homolog YusS (yusS).